The sequence spans 737 residues: uncharacterized protein (737 aa).

The next 7 helical transmembrane spans lie at 11–31 (LSLL…LRPL), 36–56 (ETKH…LTFF), 60–80 (WFVT…ILFY), 118–138 (TLLF…WVIY), 142–162 (ILFF…FTPY), 164–184 (ATFA…LLYL), and 200–220 (VLKW…FGLA). The interval 556 to 611 (PAQFTSSDTKDSGSDSSSSPKKAKEKQKEEKKQPQKEEKQKEKREPAVSKKPSASH) is disordered. Residues 581-603 (KQKEEKKQPQKEEKQKEKREPAV) are compositionally biased toward basic and acidic residues. The chain crosses the membrane as a helical span at residues 618–638 (LYAALAVLAVLLVAAVLLYVF).

The protein resides in the cell membrane. This is an uncharacterized protein from Bacillus subtilis (strain 168).